A 968-amino-acid chain; its full sequence is RNA polymerase-associated protein RapA (968 aa).

Residues 164–334 enclose the Helicase ATP-binding domain; it reads DVGRRHAPRV…FARLRLLDPN (171 aa). Position 177-184 (177-184) interacts with ATP; sequence DEVGLGKT. The DEAH box motif lies at 280-283; the sequence is DEAH. The region spanning 490–685 is the Helicase C-terminal domain; that stretch reads RVEWLMGYLT…ALKAQLEQGR (196 aa).

Belongs to the SNF2/RAD54 helicase family. RapA subfamily. In terms of assembly, interacts with the RNAP. Has a higher affinity for the core RNAP than for the holoenzyme. Its ATPase activity is stimulated by binding to RNAP.

Functionally, transcription regulator that activates transcription by stimulating RNA polymerase (RNAP) recycling in case of stress conditions such as supercoiled DNA or high salt concentrations. Probably acts by releasing the RNAP, when it is trapped or immobilized on tightly supercoiled DNA. Does not activate transcription on linear DNA. Probably not involved in DNA repair. The polypeptide is RNA polymerase-associated protein RapA (Salmonella paratyphi A (strain ATCC 9150 / SARB42)).